The chain runs to 1159 residues: DNA polymerase III subunit alpha (1159 aa).

The protein belongs to the DNA polymerase type-C family. DnaE subfamily. In terms of assembly, DNA polymerase III contains a core (composed of alpha, epsilon and theta chains) that associates with a tau subunit. This core dimerizes to form the PolIII' complex. PolIII' associates with the gamma complex (composed of gamma, delta, delta', psi and chi chains) and with the beta chain to form the complete DNA polymerase III complex.

The protein localises to the cytoplasm. It carries out the reaction DNA(n) + a 2'-deoxyribonucleoside 5'-triphosphate = DNA(n+1) + diphosphate. In terms of biological role, DNA polymerase III is a complex, multichain enzyme responsible for most of the replicative synthesis in bacteria. This DNA polymerase also exhibits 3' to 5' exonuclease activity. The alpha chain is the DNA polymerase. The chain is DNA polymerase III subunit alpha (dnaE) from Pasteurella multocida (strain Pm70).